The chain runs to 542 residues: Multidrug transporter DTR1 (542 aa).

N-linked (GlcNAc...) asparagine glycans are attached at residues N6 and N46. Residues 80–100 (LIFLIVIYNGFLGPLAGNVFI) traverse the membrane as a helical segment. N111 and N118 each carry an N-linked (GlcNAc...) asparagine glycan. 5 consecutive transmembrane segments (helical) span residues 119 to 139 (ATVS…GALA), 146 to 166 (ILYI…ASVP), 169 to 189 (IGSL…VISL), 210 to 230 (FMLG…LILL), and 237 to 257 (WLFG…ILLL). N-linked (GlcNAc...) asparagine glycosylation occurs at N274. The next 4 helical transmembrane spans lie at 332-352 (IMTF…FCTY), 374-394 (IGAC…IGGH), 419-439 (ILTV…GWCI), and 441-461 (FHYH…GLTW). An N-linked (GlcNAc...) asparagine glycan is attached at N463. 2 helical membrane-spanning segments follow: residues 481–501 (AIAV…ALIA) and 511–531 (FCFL…LVLI).

The protein belongs to the major facilitator superfamily. CAR1 family.

The protein localises to the cell membrane. Its function is as follows. Plasma membrane acetic acid exporter, relieving the stress induced upon cells within hemocytes, and thus enabling increased proliferation and virulence against Galleria mellonella larvae. Confers resistance to weak acid and oxidative stress, but not to antifungal drugs. The polypeptide is Multidrug transporter DTR1 (Candida glabrata (strain ATCC 2001 / BCRC 20586 / JCM 3761 / NBRC 0622 / NRRL Y-65 / CBS 138) (Yeast)).